We begin with the raw amino-acid sequence, 643 residues long: Threonine--tRNA ligase (643 aa).

The 61-residue stretch at 1–61 (MPIITLPDGS…TEDSTLEIIT (61 aa)) folds into the TGS domain. The segment at 243–534 (DHRKIGKALD…ITEEYAGFFP (292 aa)) is catalytic. Zn(2+) is bound by residues cysteine 334, histidine 385, and histidine 511.

Belongs to the class-II aminoacyl-tRNA synthetase family. In terms of assembly, homodimer. It depends on Zn(2+) as a cofactor.

It is found in the cytoplasm. The enzyme catalyses tRNA(Thr) + L-threonine + ATP = L-threonyl-tRNA(Thr) + AMP + diphosphate + H(+). In terms of biological role, catalyzes the attachment of threonine to tRNA(Thr) in a two-step reaction: L-threonine is first activated by ATP to form Thr-AMP and then transferred to the acceptor end of tRNA(Thr). Also edits incorrectly charged L-seryl-tRNA(Thr). In Mannheimia succiniciproducens (strain KCTC 0769BP / MBEL55E), this protein is Threonine--tRNA ligase.